The following is a 292-amino-acid chain: MTIIIDGKKIANDLCERLSQKIDILKREYNIFPCLKVILIGSNPASQVYVRNKQKKAESIGISSETIVLPNNILEDELIEKINELNEDPSVHGILVQLPLPNHISASRVINTVSVEKDVDGFHDENVGKLVKGEKNCLIPCTPKGSLHLIKSIEENLSGKNAVVIGRSNIVGKPMFYLLLQENCTVTILHSQSKDLAEYCSKADIVVAAVGKPNFVQADWIKKGAIVIDVGINSVNVGKLVGDVDFEGIKGKAKAMTPVPGGVGPMTIAFLMMNTVIAACLQKGVDASDFIS.

NADP(+)-binding positions include 166–168, Ser191, and Ile232; that span reads GRS.

This sequence belongs to the tetrahydrofolate dehydrogenase/cyclohydrolase family. In terms of assembly, homodimer.

It catalyses the reaction (6R)-5,10-methylene-5,6,7,8-tetrahydrofolate + NADP(+) = (6R)-5,10-methenyltetrahydrofolate + NADPH. It carries out the reaction (6R)-5,10-methenyltetrahydrofolate + H2O = (6R)-10-formyltetrahydrofolate + H(+). It participates in one-carbon metabolism; tetrahydrofolate interconversion. Catalyzes the oxidation of 5,10-methylenetetrahydrofolate to 5,10-methenyltetrahydrofolate and then the hydrolysis of 5,10-methenyltetrahydrofolate to 10-formyltetrahydrofolate. The sequence is that of Bifunctional protein FolD from Wolbachia pipientis wMel.